The chain runs to 450 residues: Glucose-6-phosphate isomerase (450 aa).

Residue glutamate 291 is the Proton donor of the active site. Residues histidine 312 and lysine 426 contribute to the active site.

Belongs to the GPI family.

The protein resides in the cytoplasm. The enzyme catalyses alpha-D-glucose 6-phosphate = beta-D-fructose 6-phosphate. The protein operates within carbohydrate biosynthesis; gluconeogenesis. It functions in the pathway carbohydrate degradation; glycolysis; D-glyceraldehyde 3-phosphate and glycerone phosphate from D-glucose: step 2/4. In terms of biological role, catalyzes the reversible isomerization of glucose-6-phosphate to fructose-6-phosphate. In Clostridium novyi (strain NT), this protein is Glucose-6-phosphate isomerase.